A 23-amino-acid polypeptide reads, in one-letter code: Paralytic peptide 1 (23 aa).

Cys7 and Cys19 form a disulfide bridge.

It belongs to the GBP/PSP1/paralytic peptide family. Hemolymph.

Its function is as follows. Causes rapid, rigid paralysis when injected into Lepidopteran larvae. The physiological role may be to reduce hemolymph loss following injury and promote wound healing. This Heliothis virescens (Tobacco budworm moth) protein is Paralytic peptide 1.